The following is a 107-amino-acid chain: Thioredoxin (107 aa).

Residues 2-107 (VVHIENLNAF…TLKQKINDHK (106 aa)) enclose the Thioredoxin domain. Residues cysteine 32 and cysteine 35 each act as nucleophile in the active site. A disulfide bridge connects residues cysteine 32 and cysteine 35. Cysteine 71 and cysteine 75 each carry S-nitrosocysteine.

The protein belongs to the thioredoxin family. Post-translationally, may be nitrosylated on several cysteine residues, depending on the oxidation state. Nitrosylated Cys-75 may serve as donor for nitrosylation of target proteins.

It localises to the nucleus. The protein resides in the cytoplasm. It is found in the secreted. Participates in various redox reactions through the reversible oxidation of its active center dithiol to a disulfide and catalyzes dithiol-disulfide exchange reactions. Plays a role in the reversible S-nitrosylation of cysteine residues in target proteins, and thereby contributes to the response to intracellular nitric oxide. Nitrosylates the active site Cys of CASP3 in response to nitric oxide (NO), and thereby inhibits caspase-3 activity. Induces the FOS/JUN AP-1 DNA binding activity in ionizing radiation (IR) cells through its oxidation/reduction status and stimulates AP-1 transcriptional activity. The chain is Thioredoxin (txn) from Ictalurus punctatus (Channel catfish).